The sequence spans 701 residues: Polyribonucleotide nucleotidyltransferase (701 aa).

The Mg(2+) site is built by Asp-489 and Asp-495. In terms of domain architecture, KH spans 556–615 (PRIHTMKIHPDKIREVIGSGGKVIRSITEETGCAIDIEDDGTIRIASSDQASAEQAVKII). The region spanning 625–693 (GQVYEGKVVR…RQGRVKLTMK (69 aa)) is the S1 motif domain.

It belongs to the polyribonucleotide nucleotidyltransferase family. It depends on Mg(2+) as a cofactor.

The protein resides in the cytoplasm. It carries out the reaction RNA(n+1) + phosphate = RNA(n) + a ribonucleoside 5'-diphosphate. Functionally, involved in mRNA degradation. Catalyzes the phosphorolysis of single-stranded polyribonucleotides processively in the 3'- to 5'-direction. This chain is Polyribonucleotide nucleotidyltransferase, found in Magnetococcus marinus (strain ATCC BAA-1437 / JCM 17883 / MC-1).